A 1303-amino-acid chain; its full sequence is Alpha,alpha-trehalose-phosphate synthase [UDP-forming] 2 (1303 aa).

Disordered stretches follow at residues 1-48 (MTVV…NNTT) and 205-251 (LQRR…FRGK). A compositionally biased stretch (low complexity) spans 212-221 (SSRGGSLRGS).

It in the N-terminal section; belongs to the glycosyltransferase 20 family. This sequence in the C-terminal section; belongs to the gob-1 trehalose phosphatase family.

It carries out the reaction D-glucose 6-phosphate + UDP-alpha-D-glucose = alpha,alpha-trehalose 6-phosphate + UDP + H(+). Its function is as follows. Catalyzes the production of trehalose from glucose-6-phosphate and UDP-alpha-D-glucose in a 2 step process. This chain is Alpha,alpha-trehalose-phosphate synthase [UDP-forming] 2 (tps-2), found in Aphelenchoides avenae (Mycophagous nematode worm).